A 468-amino-acid chain; its full sequence is MSSSLWLQCLQQLQEELPATEFSMWVRPLQAELNDNTLTLFAPNRFVLDWVRDKYLNSINRLLQEYCGNDVPSLRFEVGSRRVAAPKPAPTRTPADVAAESSAPAQLQARKPVHKTWDDDAQVIADINHRSNVNPKHKFNNFVEGKSNQLGLAAARQVSDNPGAAYNPLFLYGGTGLGKTHLLHAVGNAIVDNNPNAKVVYMHSERFVQDMVKALQNNAIEEFKRYYRSVDALLIDDIQFFANKERSQEEFFHTFNALLEGNQQIILTSDRYPKEISGVEDRLKSRFGWGLTVAIEPPELETRVAILMKKAEDHQIHLADEVAFFIAKRLRSNVRELEGALNRVIANANFTGRPITIDFVREALRDLLALQEKLVTIDNIQKTVAEYYKIKVADLLSKRRSRSVARPRQLAMALAKELTNHSLPEIGDAFGGRDHTTVLHACRKIEQLREESHDIKEDYSNLIRTLSS.

The domain I, interacts with DnaA modulators stretch occupies residues 1 to 84 (MSSSLWLQCL…RFEVGSRRVA (84 aa)). Positions 84–131 (AAPKPAPTRTPADVAAESSAPAQLQARKPVHKTWDDDAQVIADINHRS) are domain II. A compositionally biased stretch (low complexity) spans 85–95 (APKPAPTRTPA). Positions 85 to 104 (APKPAPTRTPADVAAESSAP) are disordered. The segment at 132–348 (NVNPKHKFNN…GALNRVIANA (217 aa)) is domain III, AAA+ region. The ATP site is built by Gly-176, Gly-178, Lys-179, and Thr-180. Residues 349-468 (NFTGRPITID…YSNLIRTLSS (120 aa)) are domain IV, binds dsDNA.

It belongs to the DnaA family. As to quaternary structure, oligomerizes as a right-handed, spiral filament on DNA at oriC.

Its subcellular location is the cytoplasm. In terms of biological role, plays an essential role in the initiation and regulation of chromosomal replication. ATP-DnaA binds to the origin of replication (oriC) to initiate formation of the DNA replication initiation complex once per cell cycle. Binds the DnaA box (a 9 base pair repeat at the origin) and separates the double-stranded (ds)DNA. Forms a right-handed helical filament on oriC DNA; dsDNA binds to the exterior of the filament while single-stranded (ss)DNA is stabiized in the filament's interior. The ATP-DnaA-oriC complex binds and stabilizes one strand of the AT-rich DNA unwinding element (DUE), permitting loading of DNA polymerase. After initiation quickly degrades to an ADP-DnaA complex that is not apt for DNA replication. Binds acidic phospholipids. Complements a temperature-sensitive E.coli mutant, the DnaA consensus is 5'-TT(A/T)TNCACA-3'. The polypeptide is Chromosomal replication initiator protein DnaA (Vibrio harveyi (Beneckea harveyi)).